A 329-amino-acid chain; its full sequence is NAD(P)H-dependent D-xylose reductase (329 aa).

Tyr-52 serves as the catalytic Proton donor. Residue His-114 coordinates substrate. Residues 173–174 (SN), 222–231 (SSFGPVSFLE), and 278–288 (KSSKKERLLDN) contribute to the NAD(+) site.

This sequence belongs to the aldo/keto reductase family.

The catalysed reaction is xylitol + NAD(+) = D-xylose + NADH + H(+). It catalyses the reaction xylitol + NADP(+) = D-xylose + NADPH + H(+). Its pathway is carbohydrate metabolism; D-xylose degradation. Its function is as follows. Reduces D-xylose into xylitol. The sequence is that of NAD(P)H-dependent D-xylose reductase (XYL1) from Kluyveromyces lactis (strain ATCC 8585 / CBS 2359 / DSM 70799 / NBRC 1267 / NRRL Y-1140 / WM37) (Yeast).